A 463-amino-acid polypeptide reads, in one-letter code: ATP sulfurylase 1, chloroplastic (463 aa).

The N-terminal 48 residues, 1–48, are a transit peptide targeting the chloroplast; that stretch reads MASMAAVLSKTPFLSQPLTKSSPNSDLPFAAVSFPSKSLRRRVGSIRA.

The protein belongs to the sulfate adenylyltransferase family. Homotetramer.

It is found in the plastid. The protein resides in the chloroplast stroma. It catalyses the reaction sulfate + ATP + H(+) = adenosine 5'-phosphosulfate + diphosphate. It participates in sulfur metabolism; hydrogen sulfide biosynthesis; sulfite from sulfate: step 1/3. Its function is as follows. Mediates selenate (Se) reduction, and promotes Se and sulfur (S) uptake and assimilation. The chain is ATP sulfurylase 1, chloroplastic (APS1) from Arabidopsis thaliana (Mouse-ear cress).